The primary structure comprises 210 residues: 2,3-bisphosphoglycerate-dependent phosphoglycerate mutase (210 aa).

Substrate contacts are provided by residues 9–16 (RHGQSEWN), 22–23 (TG), Arg-61, 88–91 (ERDY), Lys-99, 115–116 (RR), and 159–160 (GN). The active-site Tele-phosphohistidine intermediate is His-10. The active-site Proton donor/acceptor is the Glu-88.

Belongs to the phosphoglycerate mutase family. BPG-dependent PGAM subfamily. As to quaternary structure, homodimer.

It catalyses the reaction (2R)-2-phosphoglycerate = (2R)-3-phosphoglycerate. It participates in carbohydrate degradation; glycolysis; pyruvate from D-glyceraldehyde 3-phosphate: step 3/5. In terms of biological role, catalyzes the interconversion of 2-phosphoglycerate and 3-phosphoglycerate. The sequence is that of 2,3-bisphosphoglycerate-dependent phosphoglycerate mutase from Parvibaculum lavamentivorans (strain DS-1 / DSM 13023 / NCIMB 13966).